A 428-amino-acid polypeptide reads, in one-letter code: Histidinol dehydrogenase (428 aa).

Residues Tyr126, Gln188, and Asn211 each coordinate NAD(+). Residues Ser234, Gln256, and His259 each coordinate substrate. Residues Gln256 and His259 each coordinate Zn(2+). Catalysis depends on proton acceptor residues Glu324 and His325. Substrate contacts are provided by His325, Asp358, Glu412, and His417. Residue Asp358 coordinates Zn(2+). His417 contacts Zn(2+).

It belongs to the histidinol dehydrogenase family. It depends on Zn(2+) as a cofactor.

It catalyses the reaction L-histidinol + 2 NAD(+) + H2O = L-histidine + 2 NADH + 3 H(+). The protein operates within amino-acid biosynthesis; L-histidine biosynthesis; L-histidine from 5-phospho-alpha-D-ribose 1-diphosphate: step 9/9. Catalyzes the sequential NAD-dependent oxidations of L-histidinol to L-histidinaldehyde and then to L-histidine. The polypeptide is Histidinol dehydrogenase (Chlorobium chlorochromatii (strain CaD3)).